The sequence spans 198 residues: MASGNAQIGKSAPDFTATAVVDGAFKEIKLSDYRGKYVVLFFYPLDFTFVCPTEIIAFSDHAEDFRKLGCEVLGVSVDSQFTHLAWINTPRKEGGLGPLNIPLLADVTKSLSQNYGVLKNDEGIAYRGLFIIDAKGVLRQITVNDLPVGRSVDEALRLVQAFQYTDEHGEVCPAGWKPGSDTIKPNVDDSKEYFSKHN.

At A2 the chain carries N-acetylalanine. The Thioredoxin domain maps to 6–164 (AQIGKSAPDF…ALRLVQAFQY (159 aa)). The residue at position 11 (S11) is a Phosphoserine. The active-site Cysteine sulfenic acid (-SOH) intermediate is C51. A Phosphoserine modification is found at S112. T182 is modified (phosphothreonine). K196 bears the N6-acetyllysine mark.

The protein belongs to the peroxiredoxin family. AhpC/Prx1 subfamily. As to quaternary structure, homodimer; disulfide-linked, upon oxidation. 5 homodimers assemble to form a ring-like decamer. Interacts with TIPIN. In terms of processing, the enzyme can be inactivated by further oxidation of the cysteine sulfenic acid (C(P)-SOH) to sulphinic acid (C(P)-SO2H) instead of its condensation to a disulfide bond. It can be reactivated by forming a transient disulfide bond with sulfiredoxin SRXN1, which reduces the cysteine sulfinic acid in an ATP- and Mg-dependent manner. Acetylation increases resistance to transition to high molecular-mass complexes. Deacetylated by HDAC6 which decreases reducing activity. In terms of tissue distribution, widely expressed with highest levels in bone marrow. High levels also found in heart, brain, kidney and skeletal muscle. Lower levels in liver, lung and thymus.

The protein localises to the cytoplasm. It carries out the reaction a hydroperoxide + [thioredoxin]-dithiol = an alcohol + [thioredoxin]-disulfide + H2O. Its function is as follows. Thiol-specific peroxidase that catalyzes the reduction of hydrogen peroxide and organic hydroperoxides to water and alcohols, respectively. Plays a role in cell protection against oxidative stress by detoxifying peroxides and as sensor of hydrogen peroxide-mediated signaling events. Might participate in the signaling cascades of growth factors and tumor necrosis factor-alpha by regulating the intracellular concentrations of H(2)O(2). The sequence is that of Peroxiredoxin-2 (Prdx2) from Mus musculus (Mouse).